The sequence spans 270 residues: uncharacterized protein (270 aa).

Positions 1–23 (MKKLLIILAATLVLVLGSSGNFR) are cleaved as a signal peptide.

This is an uncharacterized protein from Archaeoglobus fulgidus (strain ATCC 49558 / DSM 4304 / JCM 9628 / NBRC 100126 / VC-16).